Consider the following 207-residue polypeptide: Outer-membrane lipoprotein carrier protein (207 aa).

Residues 1–21 form the signal peptide; it reads MRAIRMLLVSALAMGAVSAHA.

It belongs to the LolA family. In terms of assembly, monomer.

The protein resides in the periplasm. Participates in the translocation of lipoproteins from the inner membrane to the outer membrane. Only forms a complex with a lipoprotein if the residue after the N-terminal Cys is not an aspartate (The Asp acts as a targeting signal to indicate that the lipoprotein should stay in the inner membrane). In Pseudomonas entomophila (strain L48), this protein is Outer-membrane lipoprotein carrier protein.